We begin with the raw amino-acid sequence, 65 residues long: Large ribosomal subunit protein bL35 (65 aa).

A compositionally biased stretch (basic residues) spans 1 to 16 (MPKQKTHRASAKRFKR). The segment at 1–21 (MPKQKTHRASAKRFKRTGSGG) is disordered.

Belongs to the bacterial ribosomal protein bL35 family.

The protein is Large ribosomal subunit protein bL35 of Streptococcus pyogenes serotype M18 (strain MGAS8232).